The following is a 112-amino-acid chain: MVELSSVISKFYNDYVQNTPKKLKLVDIYLGYILLTGIIQFVYCCLVGTFPFNSFLSGFISTVSCFVLAVCLRLQANPQNKSVFAGISPERGFADFIFAHVILHLVVMNFIG.

The Cytoplasmic portion of the chain corresponds to 1–27; sequence MVELSSVISKFYNDYVQNTPKKLKLVD. Residues 28 to 48 traverse the membrane as a helical segment; it reads IYLGYILLTGIIQFVYCCLVG. Residues 49–51 are Lumenal-facing; the sequence is TFP. A helical transmembrane segment spans residues 52–72; sequence FNSFLSGFISTVSCFVLAVCL. Residues 73 to 91 are Cytoplasmic-facing; the sequence is RLQANPQNKSVFAGISPER. Residues 92-112 traverse the membrane as a helical segment; that stretch reads GFADFIFAHVILHLVVMNFIG.

It belongs to the DAD/OST2 family. In terms of assembly, component of the oligosaccharyltransferase (OST) complex.

It is found in the endoplasmic reticulum membrane. It participates in protein modification; protein glycosylation. In terms of biological role, subunit of the oligosaccharyl transferase (OST) complex that catalyzes the initial transfer of a defined glycan (Glc(3)Man(9)GlcNAc(2) in eukaryotes) from the lipid carrier dolichol-pyrophosphate to an asparagine residue within an Asn-X-Ser/Thr consensus motif in nascent polypeptide chains, the first step in protein N-glycosylation. N-glycosylation occurs cotranslationally and the complex associates with the Sec61 complex at the channel-forming translocon complex that mediates protein translocation across the endoplasmic reticulum (ER). All subunits are required for a maximal enzyme activity. Probably as part of the N-glycosylation pathway, plays a role in the regulation of tissue growth and apoptosis. This Drosophila melanogaster (Fruit fly) protein is Dolichyl-diphosphooligosaccharide--protein glycosyltransferase subunit DAD1.